The chain runs to 134 residues: Transcription antitermination protein NusB (134 aa).

It belongs to the NusB family.

Its function is as follows. Involved in transcription antitermination. Required for transcription of ribosomal RNA (rRNA) genes. Binds specifically to the boxA antiterminator sequence of the ribosomal RNA (rrn) operons. The protein is Transcription antitermination protein NusB of Shewanella sediminis (strain HAW-EB3).